The sequence spans 487 residues: Diacylglycerol kinase 4 (487 aa).

Positions 86-242 constitute a DAGKc domain; the sequence is TPEVPLMVFV…LDSWNILITM (157 aa).

The protein belongs to the eukaryotic diacylglycerol kinase family. As to quaternary structure, monomer. In terms of tissue distribution, highly expressed in pollen grains. Expressed in roots, hypocotyls, leaf vasculature, developing anthers and stigmas, and receptacles of siliques.

It localises to the endoplasmic reticulum. The protein resides in the cytoplasm. It is found in the cytosol. The catalysed reaction is a 1,2-diacyl-sn-glycerol + ATP = a 1,2-diacyl-sn-glycero-3-phosphate + ADP + H(+). Phosphorylates the second messenger diacylglycerol (DAG) to generate phosphatidic acid (PA), another important signaling molecule. PA is required for plant development and responses to abiotic stress and pathogen attack. May be involved in the accumulation of PA during cold stress. Involved in the regulation of PA and phosphatidylcholine biosynthesis in growing pollen tubes. Required for nitric oxide-dependent pollen tube growth and re-orientation responses. Functions together with DGK2 in male gametophyte development and biosynthesis of phosphatidylglycerol and phosphatidylinositol in the endoplasmic reticulum (ER). Involved in PA production for pollen grain growth, as well as leaf and root growth. Possesses guanylyl cyclase activity in vitro. The sequence is that of Diacylglycerol kinase 4 from Arabidopsis thaliana (Mouse-ear cress).